The chain runs to 345 residues: Probable S-adenosylmethionine carrier 2, chloroplastic (345 aa).

The transit peptide at Met1 to Ser31 directs the protein to the chloroplast. Solcar repeat units lie at residues Arg76 to Lys148, Leu157 to Gly239, and Glu252 to Ile334. 5 helical membrane-spanning segments follow: residues Leu82–Ile102, Tyr121–Val141, Asn156–Val176, Ala254–Ile274, and Gly309–Glu329.

It belongs to the mitochondrial carrier (TC 2.A.29) family. As to expression, expressed at low levels in seedlings, leaves, flowers, stems and roots.

The protein resides in the plastid. It localises to the chloroplast membrane. Functionally, probable S-adenosylmethionine (SAM) transporter able to catalyze both uniport and exchange reactions through membranes. This is Probable S-adenosylmethionine carrier 2, chloroplastic (SAMC2) from Arabidopsis thaliana (Mouse-ear cress).